The primary structure comprises 218 residues: 3,4-dihydroxy-2-butanone 4-phosphate synthase (218 aa).

Residues 37–38 (RE), Asp-42, 150–154 (RGGHT), and Glu-174 each bind D-ribulose 5-phosphate. Residue Glu-38 participates in Mg(2+) binding. His-153 serves as a coordination point for Mg(2+).

It belongs to the DHBP synthase family. As to quaternary structure, homodimer. Mg(2+) serves as cofactor. The cofactor is Mn(2+).

The catalysed reaction is D-ribulose 5-phosphate = (2S)-2-hydroxy-3-oxobutyl phosphate + formate + H(+). It functions in the pathway cofactor biosynthesis; riboflavin biosynthesis; 2-hydroxy-3-oxobutyl phosphate from D-ribulose 5-phosphate: step 1/1. Catalyzes the conversion of D-ribulose 5-phosphate to formate and 3,4-dihydroxy-2-butanone 4-phosphate. The polypeptide is 3,4-dihydroxy-2-butanone 4-phosphate synthase (Erwinia tasmaniensis (strain DSM 17950 / CFBP 7177 / CIP 109463 / NCPPB 4357 / Et1/99)).